Consider the following 241-residue polypeptide: uncharacterized protein (241 aa).

This is an uncharacterized protein from Methanocaldococcus jannaschii (strain ATCC 43067 / DSM 2661 / JAL-1 / JCM 10045 / NBRC 100440) (Methanococcus jannaschii).